The sequence spans 282 residues: Pantothenate synthetase (282 aa).

30–37 (MGYLHEGH) provides a ligand contact to ATP. His-37 functions as the Proton donor in the catalytic mechanism. Residue Gln-61 participates in (R)-pantoate binding. Gln-61 contributes to the beta-alanine binding site. An ATP-binding site is contributed by 147-150 (GMKD). A (R)-pantoate-binding site is contributed by Gln-153. ATP contacts are provided by residues Val-176 and 184-187 (KSSR).

It belongs to the pantothenate synthetase family. In terms of assembly, homodimer.

It localises to the cytoplasm. The enzyme catalyses (R)-pantoate + beta-alanine + ATP = (R)-pantothenate + AMP + diphosphate + H(+). Its pathway is cofactor biosynthesis; (R)-pantothenate biosynthesis; (R)-pantothenate from (R)-pantoate and beta-alanine: step 1/1. Catalyzes the condensation of pantoate with beta-alanine in an ATP-dependent reaction via a pantoyl-adenylate intermediate. The sequence is that of Pantothenate synthetase from Bacillus cereus (strain ATCC 10987 / NRS 248).